The sequence spans 556 residues: 2-succinyl-5-enolpyruvyl-6-hydroxy-3-cyclohexene-1-carboxylate synthase (556 aa).

The protein belongs to the TPP enzyme family. MenD subfamily. Homodimer. Mg(2+) is required as a cofactor. The cofactor is Mn(2+). Requires thiamine diphosphate as cofactor.

It catalyses the reaction isochorismate + 2-oxoglutarate + H(+) = 5-enolpyruvoyl-6-hydroxy-2-succinyl-cyclohex-3-ene-1-carboxylate + CO2. It participates in quinol/quinone metabolism; 1,4-dihydroxy-2-naphthoate biosynthesis; 1,4-dihydroxy-2-naphthoate from chorismate: step 2/7. The protein operates within quinol/quinone metabolism; menaquinone biosynthesis. Catalyzes the thiamine diphosphate-dependent decarboxylation of 2-oxoglutarate and the subsequent addition of the resulting succinic semialdehyde-thiamine pyrophosphate anion to isochorismate to yield 2-succinyl-5-enolpyruvyl-6-hydroxy-3-cyclohexene-1-carboxylate (SEPHCHC). In Citrobacter koseri (strain ATCC BAA-895 / CDC 4225-83 / SGSC4696), this protein is 2-succinyl-5-enolpyruvyl-6-hydroxy-3-cyclohexene-1-carboxylate synthase.